The chain runs to 1441 residues: Envelopment polyprotein (1441 aa).

An N-terminal signal peptide occupies residues 1 to 13; the sequence is MIRMLVLIVVTAA. Topologically, residues 14–200 are lumenal; that stretch reads SPVYQRCFQD…GSIANSICQN (187 aa). The N-linked (GlcNAc...) asparagine; by host glycan is linked to N57. A helical transmembrane segment spans residues 201 to 221; it reads IEIIILVTLTLLIFILLSILS. Over 222–305 the chain is Cytoplasmic; sequence KTYICYLLMP…RAARVMCKSK (84 aa). The chain crosses the membrane as a helical span at residues 306-326; sequence GPASILSIITAVLVLTFVTPI. Residues 327–365 are Lumenal-facing; it reads NSMVLGESKETFELEELPDDMLEMALRINSYYFTCILNY. Residues 366–386 traverse the membrane as a helical segment; the sequence is AVSWGLIIAGLLVGLIFKKYQ. Topologically, residues 387–452 are cytoplasmic; the sequence is HRFLNIYAMY…LVQYKAKWMM (66 aa). The chain crosses the membrane as a helical span at residues 453–473; the sequence is NFLIIYIFLILIKDSAIVGQA. Topologically, residues 474–1395 are lumenal; sequence TGTDFTTCLE…EPFKNLFGSY (922 aa). N490 and N1177 each carry an N-linked (GlcNAc...) asparagine; by host glycan. Residues 1396-1416 form a helical membrane-spanning segment; that stretch reads IGIFYTFIISIIALLVIIYVL. At 1417-1441 the chain is on the cytoplasmic side; it reads LPICFKLRDTLRKHDDAYKREMKIR.

This sequence belongs to the orthobunyavirus envelope glycoprotein family. As to quaternary structure, glycoprotein C and Glycoprotein N interact with each other. Specific enzymatic cleavages in vivo yield mature proteins including nonstructural protein NSm, glycoprotein C, and glycoprotein N.

Its subcellular location is the virion membrane. The protein localises to the host Golgi apparatus membrane. The protein resides in the host endoplasmic reticulum membrane. Glycoprotein C and Glycoprotein N interact with each other and are present at the surface of the virion. They are able to attach the virion to a cell receptor and to promote fusion of membranes after endocytosis of the virion. The polypeptide is Envelopment polyprotein (GP) (Bunyavirus La Crosse).